A 95-amino-acid polypeptide reads, in one-letter code: Aspartyl/glutamyl-tRNA(Asn/Gln) amidotransferase subunit C (95 aa).

This sequence belongs to the GatC family. Heterotrimer of A, B and C subunits.

It carries out the reaction L-glutamyl-tRNA(Gln) + L-glutamine + ATP + H2O = L-glutaminyl-tRNA(Gln) + L-glutamate + ADP + phosphate + H(+). The enzyme catalyses L-aspartyl-tRNA(Asn) + L-glutamine + ATP + H2O = L-asparaginyl-tRNA(Asn) + L-glutamate + ADP + phosphate + 2 H(+). Functionally, allows the formation of correctly charged Asn-tRNA(Asn) or Gln-tRNA(Gln) through the transamidation of misacylated Asp-tRNA(Asn) or Glu-tRNA(Gln) in organisms which lack either or both of asparaginyl-tRNA or glutaminyl-tRNA synthetases. The reaction takes place in the presence of glutamine and ATP through an activated phospho-Asp-tRNA(Asn) or phospho-Glu-tRNA(Gln). The chain is Aspartyl/glutamyl-tRNA(Asn/Gln) amidotransferase subunit C from Rhodopseudomonas palustris (strain BisA53).